Here is a 40-residue protein sequence, read N- to C-terminus: Large ribosomal subunit protein bL36 (40 aa).

This sequence belongs to the bacterial ribosomal protein bL36 family.

The sequence is that of Large ribosomal subunit protein bL36 from Coxiella burnetii (strain Dugway 5J108-111).